Consider the following 199-residue polypeptide: Securin (199 aa).

Disordered regions lie at residues methionine 1–glycine 23 and arginine 58–tyrosine 108. Alanine 2 carries the post-translational modification N-acetylalanine. Over residues valine 7–glycine 23 the composition is skewed to basic and acidic residues. Positions arginine 58–leucine 61 match the D-box motif. The TEK-box 1 motif lies at threonine 68 to lysine 70. Over residues lysine 76–leucine 85 the composition is skewed to polar residues. The TEK-box 2 signature appears at threonine 91 to lysine 93. Serine 162 is subject to Phosphoserine. An SH3-binding motif is present at residues proline 179–proline 192.

This sequence belongs to the securin family. Interacts with the caspase-like ESPL1, and prevents its protease activity by covering its active site. Interacts with p53/TP53 and blocks its activity probably by blocking its binding to DNA. Interacts with the Ku 70 kDa subunit of ds-DNA kinase. Interacts with PTTG1IP. Interacts with RPS10 and DNAJA1. Phosphorylated at Ser-162 by CDK1 during mitosis. In terms of processing, phosphorylated in vitro by ds-DNA kinase. Post-translationally, ubiquitinated through 'Lys-11' linkage of ubiquitin moieties by the anaphase promoting complex (APC) at the onset of anaphase, conducting to its degradation. 'Lys-11'-linked ubiquitination is mediated by the E2 ligase UBE2C/UBCH10. As to expression, expressed at low level in most tissues, except in adult testis, where it is highly expressed. Expressed in both spermatocytes and spermatids.

The protein resides in the cytoplasm. Its subcellular location is the nucleus. In terms of biological role, regulatory protein, which plays a central role in chromosome stability, in the p53/TP53 pathway, and DNA repair. Probably acts by blocking the action of key proteins. During the mitosis, it blocks Separase/ESPL1 function, preventing the proteolysis of the cohesin complex and the subsequent segregation of the chromosomes. At the onset of anaphase, it is ubiquitinated, conducting to its destruction and to the liberation of ESPL1. Its function is however not limited to a blocking activity, since it is required to activate ESPL1. Negatively regulates the transcriptional activity and related apoptosis activity of p53/TP53. The negative regulation of p53/TP53 may explain the strong transforming capability of the protein when it is overexpressed. May also play a role in DNA repair via its interaction with Ku, possibly by connecting DNA damage-response pathways with sister chromatid separation. This is Securin (Pttg1) from Rattus norvegicus (Rat).